The chain runs to 148 residues: 3-hydroxyacyl-[acyl-carrier-protein] dehydratase FabZ (148 aa).

His50 is an active-site residue.

This sequence belongs to the thioester dehydratase family. FabZ subfamily.

The protein localises to the cytoplasm. It carries out the reaction a (3R)-hydroxyacyl-[ACP] = a (2E)-enoyl-[ACP] + H2O. Its function is as follows. Involved in unsaturated fatty acids biosynthesis. Catalyzes the dehydration of short chain beta-hydroxyacyl-ACPs and long chain saturated and unsaturated beta-hydroxyacyl-ACPs. This Levilactobacillus brevis (strain ATCC 367 / BCRC 12310 / CIP 105137 / JCM 1170 / LMG 11437 / NCIMB 947 / NCTC 947) (Lactobacillus brevis) protein is 3-hydroxyacyl-[acyl-carrier-protein] dehydratase FabZ.